A 156-amino-acid polypeptide reads, in one-letter code: Small ribosomal subunit protein uS7cz/uS7cy (156 aa).

The protein belongs to the universal ribosomal protein uS7 family. In terms of assembly, part of the 30S ribosomal subunit.

It is found in the plastid. The protein resides in the chloroplast. In terms of biological role, one of the primary rRNA binding proteins, it binds directly to 16S rRNA where it nucleates assembly of the head domain of the 30S subunit. In Triticum aestivum (Wheat), this protein is Small ribosomal subunit protein uS7cz/uS7cy (rps7-A).